The primary structure comprises 340 residues: tRNA N6-adenosine threonylcarbamoyltransferase (340 aa).

Fe cation contacts are provided by His-111 and His-115. Residues 134-138 (LVSGG), Asp-167, Gly-180, and Asn-276 contribute to the substrate site. Asp-304 serves as a coordination point for Fe cation.

It belongs to the KAE1 / TsaD family. Fe(2+) serves as cofactor.

It is found in the cytoplasm. The enzyme catalyses L-threonylcarbamoyladenylate + adenosine(37) in tRNA = N(6)-L-threonylcarbamoyladenosine(37) in tRNA + AMP + H(+). Its function is as follows. Required for the formation of a threonylcarbamoyl group on adenosine at position 37 (t(6)A37) in tRNAs that read codons beginning with adenine. Is involved in the transfer of the threonylcarbamoyl moiety of threonylcarbamoyl-AMP (TC-AMP) to the N6 group of A37, together with TsaE and TsaB. TsaD likely plays a direct catalytic role in this reaction. The chain is tRNA N6-adenosine threonylcarbamoyltransferase from Helicobacter pylori (strain Shi470).